A 165-amino-acid chain; its full sequence is ATP synthase subunit b (165 aa).

The chain crosses the membrane as a helical span at residues 7-27; that stretch reads GTSLGNLLIVTGSFILLLLLV.

This sequence belongs to the ATPase B chain family. F-type ATPases have 2 components, F(1) - the catalytic core - and F(0) - the membrane proton channel. F(1) has five subunits: alpha(3), beta(3), gamma(1), delta(1), epsilon(1). F(0) has three main subunits: a(1), b(2) and c(10-14). The alpha and beta chains form an alternating ring which encloses part of the gamma chain. F(1) is attached to F(0) by a central stalk formed by the gamma and epsilon chains, while a peripheral stalk is formed by the delta and b chains.

The protein resides in the cell membrane. Its function is as follows. F(1)F(0) ATP synthase produces ATP from ADP in the presence of a proton or sodium gradient. F-type ATPases consist of two structural domains, F(1) containing the extramembraneous catalytic core and F(0) containing the membrane proton channel, linked together by a central stalk and a peripheral stalk. During catalysis, ATP synthesis in the catalytic domain of F(1) is coupled via a rotary mechanism of the central stalk subunits to proton translocation. Functionally, component of the F(0) channel, it forms part of the peripheral stalk, linking F(1) to F(0). In Streptococcus mutans serotype c (strain ATCC 700610 / UA159), this protein is ATP synthase subunit b.